A 407-amino-acid polypeptide reads, in one-letter code: Phosphopentomutase (407 aa).

Mn(2+) contacts are provided by Asp10, Asp306, His311, Asp347, His348, and His359.

The protein belongs to the phosphopentomutase family. Mn(2+) serves as cofactor.

Its subcellular location is the cytoplasm. The catalysed reaction is 2-deoxy-alpha-D-ribose 1-phosphate = 2-deoxy-D-ribose 5-phosphate. The enzyme catalyses alpha-D-ribose 1-phosphate = D-ribose 5-phosphate. It functions in the pathway carbohydrate degradation; 2-deoxy-D-ribose 1-phosphate degradation; D-glyceraldehyde 3-phosphate and acetaldehyde from 2-deoxy-alpha-D-ribose 1-phosphate: step 1/2. Isomerase that catalyzes the conversion of deoxy-ribose 1-phosphate (dRib-1-P) and ribose 1-phosphate (Rib-1-P) to deoxy-ribose 5-phosphate (dRib-5-P) and ribose 5-phosphate (Rib-5-P), respectively. The sequence is that of Phosphopentomutase from Salmonella gallinarum (strain 287/91 / NCTC 13346).